The primary structure comprises 120 residues: Large ribosomal subunit protein uL18 (120 aa).

Belongs to the universal ribosomal protein uL18 family. Part of the 50S ribosomal subunit; part of the 5S rRNA/L5/L18/L25 subcomplex. Contacts the 5S and 23S rRNAs.

Its function is as follows. This is one of the proteins that bind and probably mediate the attachment of the 5S RNA into the large ribosomal subunit, where it forms part of the central protuberance. This Geobacillus kaustophilus (strain HTA426) protein is Large ribosomal subunit protein uL18.